The primary structure comprises 367 residues: Ferrochelatase (367 aa).

Fe cation is bound by residues histidine 226 and glutamate 307.

The protein belongs to the ferrochelatase family.

It localises to the cytoplasm. The catalysed reaction is heme b + 2 H(+) = protoporphyrin IX + Fe(2+). It participates in porphyrin-containing compound metabolism; protoheme biosynthesis; protoheme from protoporphyrin-IX: step 1/1. Catalyzes the ferrous insertion into protoporphyrin IX. The sequence is that of Ferrochelatase from Burkholderia pseudomallei (strain 668).